The primary structure comprises 303 residues: Ribosomal protein L11 methyltransferase (303 aa).

Threonine 144, glycine 165, aspartate 187, and asparagine 235 together coordinate S-adenosyl-L-methionine.

This sequence belongs to the methyltransferase superfamily. PrmA family.

The protein localises to the cytoplasm. The catalysed reaction is L-lysyl-[protein] + 3 S-adenosyl-L-methionine = N(6),N(6),N(6)-trimethyl-L-lysyl-[protein] + 3 S-adenosyl-L-homocysteine + 3 H(+). Functionally, methylates ribosomal protein L11. This is Ribosomal protein L11 methyltransferase from Prochlorococcus marinus (strain AS9601).